Here is a 289-residue protein sequence, read N- to C-terminus: 4-hydroxy-tetrahydrodipicolinate synthase (289 aa).

Threonine 43 contacts pyruvate. Tyrosine 131 functions as the Proton donor/acceptor in the catalytic mechanism. Lysine 160 serves as the catalytic Schiff-base intermediate with substrate. Valine 200 contributes to the pyruvate binding site.

This sequence belongs to the DapA family. In terms of assembly, homotetramer; dimer of dimers.

It localises to the cytoplasm. The catalysed reaction is L-aspartate 4-semialdehyde + pyruvate = (2S,4S)-4-hydroxy-2,3,4,5-tetrahydrodipicolinate + H2O + H(+). The protein operates within amino-acid biosynthesis; L-lysine biosynthesis via DAP pathway; (S)-tetrahydrodipicolinate from L-aspartate: step 3/4. Functionally, catalyzes the condensation of (S)-aspartate-beta-semialdehyde [(S)-ASA] and pyruvate to 4-hydroxy-tetrahydrodipicolinate (HTPA). In Methanococcus maripaludis (strain DSM 14266 / JCM 13030 / NBRC 101832 / S2 / LL), this protein is 4-hydroxy-tetrahydrodipicolinate synthase.